A 294-amino-acid polypeptide reads, in one-letter code: Putative ribose uptake protein RbsU (294 aa).

The next 10 helical transmembrane spans lie at 2–24, 34–56, 63–82, 92–114, 121–140, 150–172, 179–198, 218–235, 242–264, and 274–293; these read NAVN…VIVG, ILGT…GTPI, IFCL…TFHV, MPIT…LGNW, LIGF…TAWS, GAVK…SAFP, GFQG…IIFG, IFSG…LISA, LATG…IYIL, and IAVM…TAFI.

It belongs to the GRP transporter (TC 2.A.7.5) family.

The protein resides in the cell membrane. In terms of biological role, could be involved in the uptake of ribose. This is Putative ribose uptake protein RbsU (rbsU) from Latilactobacillus sakei subsp. sakei (strain 23K) (Lactobacillus sakei subsp. sakei).